Consider the following 190-residue polypeptide: dCTP deaminase, dUMP-forming (190 aa).

Residues 101–106 (KSSLGR), D119, 127–129 (TLE), Q148, Y162, and Q174 each bind dCTP. The active-site Proton donor/acceptor is the E129. Positions 163–190 (GSSQVGSKYQGQRGPTPSKSYQNFVKSN) are disordered.

This sequence belongs to the dCTP deaminase family. Homotrimer.

It carries out the reaction dCTP + 2 H2O = dUMP + NH4(+) + diphosphate. Its pathway is pyrimidine metabolism; dUMP biosynthesis; dUMP from dCTP: step 1/1. Functionally, bifunctional enzyme that catalyzes both the deamination of dCTP to dUTP and the hydrolysis of dUTP to dUMP without releasing the toxic dUTP intermediate. This chain is dCTP deaminase, dUMP-forming, found in Mycolicibacterium gilvum (strain PYR-GCK) (Mycobacterium gilvum (strain PYR-GCK)).